Here is a 30-residue protein sequence, read N- to C-terminus: Trypsin inhibitor 3 (30 aa).

3 disulfides stabilise this stretch: C4–C21, C11–C23, and C17–C29.

The protein belongs to the protease inhibitor I7 (squash-type serine protease inhibitor) family.

It localises to the secreted. In terms of biological role, inhibits trypsin. The protein is Trypsin inhibitor 3 of Momordica charantia (Bitter gourd).